Here is a 350-residue protein sequence, read N- to C-terminus: Methionine aminopeptidase 1D, chloroplastic/mitochondrial (350 aa).

The N-terminal 49 residues, 1 to 49 (MAGVKSLQPRLISSFLGNNSIRSTQPLIHLFRFDLGRRHVSMQLSRTFS), are a transit peptide targeting the chloroplast and mitochondrion. At Gly-50 the chain carries N-acetylglycine. Positions 71-90 (RLRPGNVSPRRPVPGHITKP) are disordered. His-180 contacts substrate. A divalent metal cation contacts are provided by Asp-197, Asp-208, and His-271. Residue His-278 participates in substrate binding. A divalent metal cation contacts are provided by Glu-303 and Glu-334.

The protein belongs to the peptidase M24A family. Methionine aminopeptidase type 1 subfamily. It depends on Co(2+) as a cofactor. The cofactor is Zn(2+). Requires Mn(2+) as cofactor. Fe(2+) is required as a cofactor. Ubiquitous. Preferentially expressed in green tissues.

It is found in the plastid. It localises to the chloroplast. The protein localises to the mitochondrion. It catalyses the reaction Release of N-terminal amino acids, preferentially methionine, from peptides and arylamides.. In terms of biological role, removes the N-terminal methionine from nascent proteins. The N-terminal methionine is often cleaved when the second residue in the primary sequence is small and uncharged (Met-Ala-, Cys, Gly, Pro, Ser, Thr, or Val). The chain is Methionine aminopeptidase 1D, chloroplastic/mitochondrial (MAP1D) from Arabidopsis thaliana (Mouse-ear cress).